The primary structure comprises 373 residues: GDP-mannose 4,6-dehydratase (373 aa).

NADP(+)-binding positions include Gly-9 to Asp-14, Asp-64 to Leu-65, Leu-86 to Ser-90, and Tyr-101. Residue Thr-133 is part of the active site. Residues Glu-135 and Tyr-157 each act as nucleophile in the active site. Positions 161, 187, and 192 each coordinate NADP(+).

Belongs to the NAD(P)-dependent epimerase/dehydratase family. GDP-mannose 4,6-dehydratase subfamily. The cofactor is NADP(+).

The catalysed reaction is GDP-alpha-D-mannose = GDP-4-dehydro-alpha-D-rhamnose + H2O. The protein operates within nucleotide-sugar biosynthesis; GDP-L-fucose biosynthesis via de novo pathway; GDP-L-fucose from GDP-alpha-D-mannose: step 1/2. Catalyzes the conversion of GDP-D-mannose to GDP-4-dehydro-6-deoxy-D-mannose. In Escherichia coli O157:H7, this protein is GDP-mannose 4,6-dehydratase.